Reading from the N-terminus, the 627-residue chain is Xaa-Pro aminopeptidase 1 (627 aa).

Residues Arg88 and His405 each coordinate a peptide. Mn(2+)-binding residues include Asp424, Asp435, and His498. 3 residues coordinate a peptide: His498, His507, and Glu533. Mn(2+)-binding residues include Glu533 and Glu547.

Belongs to the peptidase M24B family. In terms of assembly, homodimer. Mn(2+) is required as a cofactor.

The protein localises to the cytoplasm. Its subcellular location is the cytosol. It carries out the reaction Release of any N-terminal amino acid, including proline, that is linked to proline, even from a dipeptide or tripeptide.. Metalloaminopeptidase that catalyzes the removal of a penultimate prolyl residue from the N-termini of peptides, such as Arg-Pro-Pro. In Dictyostelium discoideum (Social amoeba), this protein is Xaa-Pro aminopeptidase 1 (xpnpep1).